A 557-amino-acid chain; its full sequence is MNEDETSILNKKMEKIEVEMAEFERLGAEREKEAVERIVQEENQNPEVPSNDDASTDIKSRKEGNMKVTAEEIGLETENFDELPVSNGFGVSRRETHYGNNRTYYKNSQGYRRKPKRDDYNNNRKNFYPPIQNSTYFINATGGIDSMPYFGLNNAPGNIYPFSMYKPLEADPQYLSVPSSMPSRREAGMAYGYQNYKRGGYTPNTQYFEEPLNNTSFPNSQGKEGKNSGYRKSSRILDIRVKFGNSSMKAINFQPKKKIVHVVHNPRLHQNKVLRVSIPGSQPALVTPKHKMNVPPMGMYPLPFSPLPSAAPPIPFSPNVSSHPHMAFLPATVPTHSAPPGFVPYDFPITNDKMYPSPSFQEEFPSTSKSPSATPGSSNAPVVDMHPSADSATYPTSIYPSNVRARDDSQQAYISANMTTGEMPSMTNVPAGNAPAAPGTMYTTPLPTANSPIAYQSYSVMPTYWSFPQNYDSTVPAVYPYMPPPFSGSDMNVMSNPAADTLRSYSPASQVSTPPFGFVYYYDPNQYYVPVSNESANATSQPLSNLDTGGSAPYDHI.

Residues 2-45 (NEDETSILNKKMEKIEVEMAEFERLGAEREKEAVERIVQEENQN) adopt a coiled-coil conformation. 4 disordered regions span residues 39-62 (VQEENQNPEVPSNDDASTDIKSRK), 101-127 (NRTYYKNSQGYRRKPKRDDYNNNRKNF), 356-402 (PSPS…YPSN), and 536-557 (ANATSQPLSNLDTGGSAPYDHI). 4 stretches are compositionally biased toward polar residues: residues 101 to 110 (NRTYYKNSQG), 358 to 380 (PSFQEEFPSTSKSPSATPGSSNA), 390 to 400 (DSATYPTSIYP), and 536 to 548 (ANATSQPLSNLDT).

It is found in the cytoplasm. The protein localises to the nucleus. This is an uncharacterized protein from Schizosaccharomyces pombe (strain 972 / ATCC 24843) (Fission yeast).